We begin with the raw amino-acid sequence, 201 residues long: Small ribosomal subunit protein uS4 (201 aa).

Residues 103–167 (RRLQTIVTKK…SKIPQVLEKT (65 aa)) enclose the S4 RNA-binding domain. Residues 163–201 (VLEKTKSEAPAEETVEAPAEETVEAPAEEKKEESPSTES) form a disordered region. The segment covering 172–185 (PAEETVEAPAEETV) has biased composition (acidic residues). Residues 189-201 (AEEKKEESPSTES) are compositionally biased toward basic and acidic residues.

This sequence belongs to the universal ribosomal protein uS4 family. In terms of assembly, part of the 30S ribosomal subunit. Contacts protein S5. The interaction surface between S4 and S5 is involved in control of translational fidelity.

In terms of biological role, one of the primary rRNA binding proteins, it binds directly to 16S rRNA where it nucleates assembly of the body of the 30S subunit. Functionally, with S5 and S12 plays an important role in translational accuracy. The protein is Small ribosomal subunit protein uS4 of Nitrosopumilus maritimus (strain SCM1).